A 463-amino-acid polypeptide reads, in one-letter code: L-seryl-tRNA(Sec) selenium transferase (463 aa).

Position 295 is an N6-(pyridoxal phosphate)lysine (Lys-295).

The protein belongs to the SelA family. Homodecamer; pentamer of dimers. Binds only one seryl-tRNA(Sec) per dimer. Requires pyridoxal 5'-phosphate as cofactor.

It localises to the cytoplasm. The enzyme catalyses L-seryl-tRNA(Sec) + selenophosphate + H(+) = L-selenocysteinyl-tRNA(Sec) + phosphate. It participates in aminoacyl-tRNA biosynthesis; selenocysteinyl-tRNA(Sec) biosynthesis; selenocysteinyl-tRNA(Sec) from L-seryl-tRNA(Sec) (bacterial route): step 1/1. In terms of biological role, converts seryl-tRNA(Sec) to selenocysteinyl-tRNA(Sec) required for selenoprotein biosynthesis. In Salmonella dublin (strain CT_02021853), this protein is L-seryl-tRNA(Sec) selenium transferase.